The primary structure comprises 92 residues: Small ribosomal subunit protein uS19c (92 aa).

Belongs to the universal ribosomal protein uS19 family.

The protein localises to the plastid. Protein S19 forms a complex with S13 that binds strongly to the 16S ribosomal RNA. In Aneura mirabilis (Parasitic liverwort), this protein is Small ribosomal subunit protein uS19c.